Here is a 218-residue protein sequence, read N- to C-terminus: Large ribosomal subunit protein uL3 (218 aa).

The disordered stretch occupies residues 127–167 (GFSRGPMSHGSKNHREPGSTGAGTTPGRIYPGKRMAGRYGG).

The protein belongs to the universal ribosomal protein uL3 family. As to quaternary structure, part of the 50S ribosomal subunit. Forms a cluster with proteins L14 and L19.

One of the primary rRNA binding proteins, it binds directly near the 3'-end of the 23S rRNA, where it nucleates assembly of the 50S subunit. In Prochlorococcus marinus (strain MIT 9303), this protein is Large ribosomal subunit protein uL3.